A 323-amino-acid polypeptide reads, in one-letter code: Acetyl esterase (323 aa).

The short motif at 91–93 is the Involved in the stabilization of the negatively charged intermediate by the formation of the oxyanion hole element; it reads HGG. Active-site residues include serine 165, aspartate 262, and histidine 292.

It belongs to the 'GDXG' lipolytic enzyme family. As to quaternary structure, homodimer. Interacts with MalT and MelA.

The protein resides in the cytoplasm. In terms of biological role, displays esterase activity towards short chain fatty esters (acyl chain length of up to 8 carbons). Able to hydrolyze triacetylglycerol (triacetin) and tributyrylglycerol (tributyrin), but not trioleylglycerol (triolein) or cholesterol oleate. Negatively regulates MalT activity by antagonizing maltotriose binding. Inhibits MelA galactosidase activity. The polypeptide is Acetyl esterase (Salmonella paratyphi A (strain ATCC 9150 / SARB42)).